Here is a 179-residue protein sequence, read N- to C-terminus: Archaemetzincin (179 aa).

His-128 contacts Zn(2+). The Proton acceptor role is filled by Glu-129. His-132, His-138, Cys-139, Cys-144, Cys-163, and Cys-166 together coordinate Zn(2+).

This sequence belongs to the peptidase M54 family. Monomer. Zn(2+) serves as cofactor.

In terms of biological role, probable zinc metalloprotease whose natural substrate is unknown. The polypeptide is Archaemetzincin (Methanocaldococcus jannaschii (strain ATCC 43067 / DSM 2661 / JAL-1 / JCM 10045 / NBRC 100440) (Methanococcus jannaschii)).